Here is a 583-residue protein sequence, read N- to C-terminus: Sphingomyelin phosphodiesterase A (583 aa).

Positions 1–21 (MKSIPIILLVLIGLLLASVYS) are cleaved as a signal peptide. Residues 51–133 (IQLSCDVCQI…GYFKICSATG (83 aa)) form the Saposin B-type domain. 3 disulfide bridges follow: Cys55–Cys129, Cys58–Cys123, and Cys86–Cys97. A glycan (N-linked (GlcNAc...) asparagine) is linked at Asn72. Residue Asn182 is glycosylated (N-linked (GlcNAc...) asparagine). Residues Asp193 and His195 each coordinate Zn(2+). An intrachain disulfide couples Cys214 to Cys229. Positions 258 and 298 each coordinate Zn(2+). N-linked (GlcNAc...) asparagine glycosylation is present at Asn377. 3 residues coordinate Zn(2+): His401, His436, and His438. Asn495, Asn500, Asn537, and Asn547 each carry an N-linked (GlcNAc...) asparagine glycan. The cysteines at positions 567 and 580 are disulfide-linked.

It belongs to the acid sphingomyelinase family. The cofactor is Zn(2+).

Its subcellular location is the secreted. Converts sphingomyelin to ceramide. In Dictyostelium discoideum (Social amoeba), this protein is Sphingomyelin phosphodiesterase A (sgmA).